Here is a 622-residue protein sequence, read N- to C-terminus: Low affinity potassium transport system protein Kup (622 aa).

12 helical membrane passes run 9 to 29 (LPAITLAAIGVVYGDIGTSPL), 49 to 69 (VFGFLSLIFWLLIFVVSIKYL), 103 to 123 (VIMGLIGGSFFYGEVVITPAI), 137 to 157 (PQLDTWIVPLSIIVLTLLFMI), 165 to 185 (VGKLFAPIMLTWFLILAVLGL), 213 to 233 (VSFIALGAVVLSITGVEALYA), 247 to 267 (WFTVVLPSLVLNYFGQGALLL), 276 to 296 (PFFLLAPDWALIPLLILAALA), 337 to 357 (IYIPFVNWLLYFAVVVVIVSF), 363 to 383 (LAAAYGIAVTGTMVLTSILST), 396 to 416 (FVALILIAFLCVDIPLFSANL), and 419 to 439 (LLSGGWLPLSLGLIMFTIMTT).

The protein belongs to the HAK/KUP transporter (TC 2.A.72) family.

The protein localises to the cell inner membrane. It carries out the reaction K(+)(in) + H(+)(in) = K(+)(out) + H(+)(out). Its function is as follows. Responsible for the low-affinity transport of potassium into the cell. Likely operates as a K(+):H(+) symporter. The sequence is that of Low affinity potassium transport system protein Kup from Salmonella paratyphi B (strain ATCC BAA-1250 / SPB7).